The primary structure comprises 337 residues: Glyceraldehyde-3-phosphate dehydrogenase (337 aa).

NAD(+) is bound by residues 12-13, aspartate 34, and arginine 79; that span reads RI. D-glyceraldehyde 3-phosphate is bound by residues 150 to 152, threonine 181, 210 to 211, and arginine 233; these read SCT and TG. The active-site Nucleophile is the cysteine 151. Asparagine 315 contacts NAD(+).

It belongs to the glyceraldehyde-3-phosphate dehydrogenase family. Homotetramer.

It is found in the cytoplasm. The catalysed reaction is D-glyceraldehyde 3-phosphate + phosphate + NAD(+) = (2R)-3-phospho-glyceroyl phosphate + NADH + H(+). The protein operates within carbohydrate degradation; glycolysis; pyruvate from D-glyceraldehyde 3-phosphate: step 1/5. The protein is Glyceraldehyde-3-phosphate dehydrogenase (GPD) of Omphalotus olearius (Jack o'lantern).